Reading from the N-terminus, the 2483-residue chain is Cation-independent mannose-6-phosphate receptor (2483 aa).

Positions 1 to 35 are cleaved as a signal peptide; that stretch reads MRAVQLGPVPSGPRVALLPPLLLLLLLAAAGSAQA. Topologically, residues 36–2295 are lumenal; that stretch reads QAVDLDALCS…YKGLSERSQA (2260 aa). MRH domains are found at residues 42–158, 167–315, 321–463, 468–613, 619–755, 758–917, 925–1072, 1075–1212, and 1218–1356; these read ALCS…ACKK, VPCY…ACHR, ESCS…ACIK, LLCG…ACVL, ENCT…ACPE, LECM…ACPI, QACS…ACTP, VDCQ…ACPV, and DNCQ…ACPP. 2 disulfides stabilise this stretch: Cys-44-Cys-64 and Cys-72-Cys-79. An N-linked (GlcNAc...) asparagine glycan is attached at Asn-107. 8 disulfides stabilise this stretch: Cys-112–Cys-144, Cys-129–Cys-156, Cys-169–Cys-207, Cys-223–Cys-230, Cys-270–Cys-301, Cys-283–Cys-313, Cys-323–Cys-361, and Cys-369–Cys-377. Residues Asn-395 and Asn-430 are each glycosylated (N-linked (GlcNAc...) asparagine). Intrachain disulfides connect Cys-415-Cys-449, Cys-429-Cys-461, Cys-470-Cys-513, and Cys-525-Cys-532. 2 N-linked (GlcNAc...) asparagine glycosylation sites follow: Asn-537 and Asn-575. Intrachain disulfides connect Cys-566–Cys-599 and Cys-580–Cys-611. Residue Asn-620 is glycosylated (N-linked (GlcNAc...) asparagine). Intrachain disulfides connect Cys-621/Cys-658, Cys-666/Cys-673, Cys-724/Cys-753, Cys-760/Cys-807, and Cys-816/Cys-823. A glycan (N-linked (GlcNAc...) asparagine) is linked at Asn-740. Residue Asn-864 is glycosylated (N-linked (GlcNAc...) asparagine). Intrachain disulfides connect Cys-868–Cys-903, Cys-886–Cys-915, Cys-927–Cys-964, Cys-970–Cys-981, Cys-1035–Cys-1070, Cys-1077–Cys-1118, and Cys-1127–Cys-1135. Residue Asn-944 is glycosylated (N-linked (GlcNAc...) asparagine). Asn-1157 carries N-linked (GlcNAc...) asparagine glycosylation. Disulfide bonds link Cys-1170-Cys-1198, Cys-1183-Cys-1210, Cys-1220-Cys-1255, and Cys-1263-Cys-1275. N-linked (GlcNAc...) asparagine glycosylation is present at Asn-1239. Asn-1305 carries N-linked (GlcNAc...) asparagine glycosylation. 2 cysteine pairs are disulfide-bonded: Cys-1312–Cys-1342 and Cys-1326–Cys-1354. N-linked (GlcNAc...) asparagine glycosylation is present at Asn-1358. 6 consecutive MRH domains span residues 1360-1501, 1507-1641, 1643-1790, 1795-1982, 1985-2120, and 2128-2273; these read TECS…ACPV, DDCQ…ACEQ, TECT…VCPD, QGCA…VCPP, MECK…ACAV, and VNGT…VCPL. Intrachain disulfides connect Cys-1362–Cys-1401 and Cys-1413–Cys-1420. Residue Asn-1423 is glycosylated (N-linked (GlcNAc...) asparagine). 20 disulfides stabilise this stretch: Cys-1454-Cys-1487, Cys-1469-Cys-1499, Cys-1509-Cys-1546, Cys-1552-Cys-1559, Cys-1591-Cys-1627, Cys-1607-Cys-1639, Cys-1645-Cys-1688, Cys-1699-Cys-1706, Cys-1743-Cys-1776, Cys-1759-Cys-1788, Cys-1797-Cys-1832, Cys-1843-Cys-1849, Cys-1886-Cys-1968, Cys-1896-Cys-1920, Cys-1910-Cys-1935, Cys-1950-Cys-1980, Cys-1987-Cys-2022, Cys-2032-Cys-2039, Cys-2075-Cys-2106, and Cys-2089-Cys-2118. Residue Asn-1532 is glycosylated (N-linked (GlcNAc...) asparagine). Residue Asn-1649 is glycosylated (N-linked (GlcNAc...) asparagine). Asn-1750 carries N-linked (GlcNAc...) asparagine glycosylation. The N-linked (GlcNAc...) asparagine glycan is linked to Asn-1809. The Fibronectin type-II domain maps to 1891 to 1937; sequence DDGEPCVFPFIYKGKSYDECVLEGRAKLWCSKTANYDRDHEWGFCRQ. N-linked (GlcNAc...) asparagine glycosylation is present at Asn-2078. Asn-2129 carries an N-linked (GlcNAc...) asparagine glycan. 3 disulfides stabilise this stretch: Cys-2181/Cys-2187, Cys-2225/Cys-2259, and Cys-2241/Cys-2271. The helical transmembrane segment at 2296 to 2316 threads the bilayer; sequence VGAVLSLLLVALTGCLLALLL. The Cytoplasmic portion of the chain corresponds to 2317-2483; sequence HKKERRETVI…DDSDEDLLHI (167 aa). Lys-2342 carries the post-translational modification N6-acetyllysine. Residue Ser-2401 is modified to Phosphoserine. The interval 2415–2483 is disordered; it reads SGRGAEVESS…DDSDEDLLHI (69 aa). Arg-2417 is modified (omega-N-methylarginine). 2 stretches are compositionally biased toward basic and acidic residues: residues 2434-2451 and 2471-2483; these read VLKEREGERLGLVRGEKA and SFHDDSDEDLLHI. 2 positions are modified to phosphoserine: Ser-2471 and Ser-2476.

The protein belongs to the MRL1/IGF2R family. In terms of assembly, binds HA-I and HA-II plasma membrane adapters. Interacts with DPP4; the interaction is direct. Binds GGA1, GGA2 and GGA3. Interacts with the heterotrimeric retromer cargo-selective complex (CSC), formed by VPS26 (VPS26A or VPS26B), VPS29 and VPS35; which is involved in retrograde trafficking of the receptor from endosomes to the Golgi apparatus. Palmitoylated. Undergoes cysteine S-palmitoylation which promotes interaction with the retromer cargo-selective complex which mediates its retrograde trafficking to the Golgi apparatus.

Its subcellular location is the golgi apparatus membrane. The protein localises to the endosome membrane. Functionally, mediates the transport of phosphorylated lysosomal enzymes from the Golgi complex and the cell surface to lysosomes. Lysosomal enzymes bearing phosphomannosyl residues bind specifically to mannose-6-phosphate receptors in the Golgi apparatus and the resulting receptor-ligand complex is transported to an acidic prelysosomal compartment where the low pH mediates the dissociation of the complex. The receptor is then recycled back to the Golgi for another round of trafficking through its binding to the retromer. This receptor also binds IGF2. Acts as a positive regulator of T-cell coactivation by binding DPP4. The chain is Cation-independent mannose-6-phosphate receptor (Igf2r) from Mus musculus (Mouse).